The sequence spans 187 residues: GTP cyclohydrolase 1 (187 aa).

Cys76, His79, and Cys148 together coordinate Zn(2+).

The protein belongs to the GTP cyclohydrolase I family. As to quaternary structure, toroid-shaped homodecamer, composed of two pentamers of five dimers.

The catalysed reaction is GTP + H2O = 7,8-dihydroneopterin 3'-triphosphate + formate + H(+). Its pathway is cofactor biosynthesis; 7,8-dihydroneopterin triphosphate biosynthesis; 7,8-dihydroneopterin triphosphate from GTP: step 1/1. The sequence is that of GTP cyclohydrolase 1 from Streptococcus agalactiae serotype III (strain NEM316).